The sequence spans 123 residues: Putative membrane protein insertion efficiency factor (123 aa).

Residues 1–23 form a disordered region; it reads MGSCGGKHTGKGAPKPYSRNFTD.

This sequence belongs to the UPF0161 family.

It localises to the cell inner membrane. In terms of biological role, could be involved in insertion of integral membrane proteins into the membrane. In Brucella ovis (strain ATCC 25840 / 63/290 / NCTC 10512), this protein is Putative membrane protein insertion efficiency factor.